A 123-amino-acid polypeptide reads, in one-letter code: MESSLYKKTSGKARRALRVRKALKGCSLKPRLSVVKTNKHVYVQLIDDVEGKTLAFISTLAKVAKTSGLTRKNQDNAKALGIKIAELGKGLQVDRVVFDRGAHKYHGVVAMVADGAREGGLQF.

The protein belongs to the universal ribosomal protein uL18 family. In terms of assembly, part of the 50S ribosomal subunit; part of the 5S rRNA/L5/L18/L25 subcomplex. Contacts the 5S and 23S rRNAs.

This is one of the proteins that bind and probably mediate the attachment of the 5S RNA into the large ribosomal subunit, where it forms part of the central protuberance. This chain is Large ribosomal subunit protein uL18, found in Chlamydia trachomatis serovar L2 (strain ATCC VR-902B / DSM 19102 / 434/Bu).